We begin with the raw amino-acid sequence, 221 residues long: MLTLEDKDMKGFSWAIVPALTSLGYLIILVVSIFPFWVRLTNEESHEVFFSGLFENCFNAKCWKPRPLSIYIILGRVFLLSAVFLAFVTTFIMMPFASEFFPRTWKQNFVLACISFFTGACAFLALVLHALEIKALRMKLGPLQFSVLWPYYVLGFGIFLFIVAGTICLIQEMVCPCWHLLSTSQSMEEDHGSLYLDNLESLGGEPSSVQKETQVTAETVI.

4 membrane-spanning segments follow: residues 14–34 (WAIV…VSIF), 77–97 (VFLL…MPFA), 109–129 (FVLA…LVLH), and 147–167 (VLWP…AGTI).

The protein resides in the membrane. The protein is Transmembrane protein 225B of Homo sapiens (Human).